The chain runs to 268 residues: Hydroxyethylthiazole kinase 2 (268 aa).

Met42 contributes to the substrate binding site. ATP-binding residues include Lys117 and Thr167. Gly194 is a substrate binding site.

This sequence belongs to the Thz kinase family. It depends on Mg(2+) as a cofactor.

It catalyses the reaction 5-(2-hydroxyethyl)-4-methylthiazole + ATP = 4-methyl-5-(2-phosphooxyethyl)-thiazole + ADP + H(+). The protein operates within cofactor biosynthesis; thiamine diphosphate biosynthesis; 4-methyl-5-(2-phosphoethyl)-thiazole from 5-(2-hydroxyethyl)-4-methylthiazole: step 1/1. Its function is as follows. Catalyzes the phosphorylation of the hydroxyl group of 4-methyl-5-beta-hydroxyethylthiazole (THZ). The sequence is that of Hydroxyethylthiazole kinase 2 from Streptococcus pneumoniae (strain CGSP14).